A 306-amino-acid chain; its full sequence is Small ribosomal subunit protein uS2 (306 aa).

The residue at position 2 (S2) is an N-acetylserine. Laminin-binding stretches follow at residues 161–180 (IPCN…MLAR) and 205–229 (RDPE…EYQG). 5 [DE]-W-[ST] repeats span residues 230–232 (EWT), 245–247 (DWS), 276–278 (DWS), 286–288 (DWS), and 304–306 (EWS). The laminin-binding stretch occupies residues 242 to 306 (EVADWSEGVQ…EWTGTTTEWS (65 aa)). Positions 261–306 (PAERPEIPAAKPAAEDWSSQPASTDDWSAAPTAQASEWTGTTTEWS) are disordered. The segment covering 277–306 (WSSQPASTDDWSAAPTAQASEWTGTTTEWS) has biased composition (polar residues).

The protein belongs to the universal ribosomal protein uS2 family. Monomer (37LRP) and homodimer (67LR). Component of the small ribosomal subunit. Mature ribosomes consist of a small (40S) and a large (60S) subunit. The 40S subunit contains about 33 different proteins and 1 molecule of RNA (18S). The 60S subunit contains about 49 different proteins and 3 molecules of RNA (28S, 5.8S and 5S). Interacts with rps21. Interacts with several laminins including at least lamb1. Interacts with mdk. In terms of processing, acylated. Acylation may be a prerequisite for conversion of the monomeric 37 kDa laminin receptor precursor (37LRP) to the mature dimeric 67 kDa laminin receptor (67LR), and may provide a mechanism for membrane association. Post-translationally, cleaved by stromelysin-3 (ST3) at the cell surface. Cleavage by stromelysin-3 may be a mechanism to alter cell-extracellular matrix interactions.

It is found in the cell membrane. Its subcellular location is the cytoplasm. The protein resides in the nucleus. In terms of biological role, required for the assembly and/or stability of the 40S ribosomal subunit. Required for the processing of the 20S rRNA-precursor to mature 18S rRNA in a late step of the maturation of 40S ribosomal subunits. Also functions as a cell surface receptor for laminin. Plays a role in cell adhesion to the basement membrane and in the consequent activation of signaling transduction pathways. May play a role in cell fate determination and tissue morphogenesis. The sequence is that of Small ribosomal subunit protein uS2 (rpsa) from Xenopus tropicalis (Western clawed frog).